Reading from the N-terminus, the 475-residue chain is Crocetin glucosyltransferase 3 (475 aa).

The Proton acceptor role is filled by H16. H16 is an an anthocyanidin binding site. D123 functions as the Charge relay in the catalytic mechanism. UDP-alpha-D-glucose is bound by residues T144, A354, Q356, H371, W374, N375, S376, and E379. Residue A394 participates in an anthocyanidin binding. Residues E395 and Q396 each coordinate UDP-alpha-D-glucose.

It belongs to the UDP-glycosyltransferase family. As to expression, mainly expressed in stamens.

It carries out the reaction crocetin + UDP-alpha-D-glucose = beta-D-glucosyl crocetin + UDP. It catalyses the reaction beta-D-glucosyl crocetin + UDP-alpha-D-glucose = bis(beta-D-glucosyl) crocetin + UDP. The catalysed reaction is beta-D-gentiobiosyl crocetin + UDP-alpha-D-glucose = beta-D-gentiobiosyl beta-D-glucosyl crocetin + UDP. Its function is as follows. Crocetin glucosyltransferase involved in the synthesis of crocin, one of the apocarotenoids responsible for the color and bitter taste of saffron. The protein is Crocetin glucosyltransferase 3 (GLT3) of Crocus sativus (Saffron).